Reading from the N-terminus, the 479-residue chain is Glutamyl-tRNA(Gln) amidotransferase subunit A (479 aa).

Residues Lys-71 and Ser-146 each act as charge relay system in the active site. Ser-170 acts as the Acyl-ester intermediate in catalysis.

It belongs to the amidase family. GatA subfamily. In terms of assembly, heterotrimer of A, B and C subunits.

The catalysed reaction is L-glutamyl-tRNA(Gln) + L-glutamine + ATP + H2O = L-glutaminyl-tRNA(Gln) + L-glutamate + ADP + phosphate + H(+). Functionally, allows the formation of correctly charged Gln-tRNA(Gln) through the transamidation of misacylated Glu-tRNA(Gln) in organisms which lack glutaminyl-tRNA synthetase. The reaction takes place in the presence of glutamine and ATP through an activated gamma-phospho-Glu-tRNA(Gln). The chain is Glutamyl-tRNA(Gln) amidotransferase subunit A from Lactobacillus gasseri (strain ATCC 33323 / DSM 20243 / BCRC 14619 / CIP 102991 / JCM 1131 / KCTC 3163 / NCIMB 11718 / NCTC 13722 / AM63).